A 945-amino-acid polypeptide reads, in one-letter code: Argonaute protein wago-1 (945 aa).

Positions 1-20 (MSPHPPQPHPPMPPMPPVTA) are enriched in pro residues. A disordered region spans residues 1 to 41 (MSPHPPQPHPPMPPMPPVTAPPGAMTPMPPVPADAQKLHQS). Residues 322–432 (TVIQKLFDIT…FPAELMTVSR (111 aa)) form the PAZ domain. Positions 636 to 899 (VKDGKRLTLE…PLYVANEYAK (264 aa)) constitute a Piwi domain.

This sequence belongs to the Argonaute family. WAGO subfamily. As to quaternary structure, interacts with rde-12. Interacts with znfx-1. In terms of tissue distribution, enriched in sperm and oocytes.

It is found in the cytoplasmic granule. In terms of biological role, argonaute protein which is involved in the endogenous small interfering RNA (endo-siRNA) pathway. Interacts with secondary 22G-RNAs, which are RNA-dependent RNA polymerase-derived endo-siRNAs, typically 22 nucleotides in length with a 5'guanosine residue. In the germline, functions in a genome surveillance system to silence transposons and aberrant transcripts. This chain is Argonaute protein wago-1, found in Caenorhabditis elegans.